The following is a 446-amino-acid chain: Phosphoglucosamine mutase (446 aa).

Ser-100 functions as the Phosphoserine intermediate in the catalytic mechanism. Residues Ser-100, Asp-241, Asp-243, and Asp-245 each contribute to the Mg(2+) site. Ser-100 bears the Phosphoserine mark.

The protein belongs to the phosphohexose mutase family. Mg(2+) is required as a cofactor. Post-translationally, activated by phosphorylation.

The enzyme catalyses alpha-D-glucosamine 1-phosphate = D-glucosamine 6-phosphate. Its function is as follows. Catalyzes the conversion of glucosamine-6-phosphate to glucosamine-1-phosphate. The chain is Phosphoglucosamine mutase from Methylobacterium sp. (strain 4-46).